Consider the following 415-residue polypeptide: Zona pellucida-like domain-containing protein 1 (415 aa).

The N-terminal stretch at 1 to 19 (MEQIRLLLLLTIRVLSGSA) is a signal peptide. Topologically, residues 20–372 (QFNGYNCDAN…PPFQLNAITS (353 aa)) are extracellular. The ZP domain maps to 43-320 (YCGVQAITMK…PICSHRERRD (278 aa)). 2 cysteine pairs are disulfide-bonded: cysteine 44-cysteine 155 and cysteine 79-cysteine 104. N-linked (GlcNAc...) asparagine glycosylation occurs at asparagine 164. Intrachain disulfides connect cysteine 235–cysteine 296 and cysteine 255–cysteine 313. Residues 323-359 (RRTTWSSQSSSGSAVLSAGPIITRSDETPTNNSQLGS) form a disordered region. Residues 328–339 (SSQSSSGSAVLS) are compositionally biased toward low complexity. Positions 350-359 (TPTNNSQLGS) are enriched in polar residues. A helical membrane pass occupies residues 373-393 (ALISGMVILGVMSFSLLVCPL). The Cytoplasmic segment spans residues 394 to 415 (ALLHRKGPTSLVLNGIRNPVFD).

Proteolytically cleaved before the transmembrane segment to yield the secreted form found in the extracellular matrix of the cupula.

Its subcellular location is the cytoplasmic vesicle membrane. The protein resides in the secreted. It is found in the extracellular space. It localises to the extracellular matrix. Its function is as follows. Glycoprotein which is a component of the gelatinous extracellular matrix in the cupulae of the vestibular organ. The sequence is that of Zona pellucida-like domain-containing protein 1 (ZPLD1) from Macaca fascicularis (Crab-eating macaque).